A 156-amino-acid chain; its full sequence is 6,7-dimethyl-8-ribityllumazine synthase (156 aa).

Residues phenylalanine 22, 57–59 (AYE), and 81–83 (TVI) each bind 5-amino-6-(D-ribitylamino)uracil. Position 86-87 (86-87 (GT)) interacts with (2S)-2-hydroxy-3-oxobutyl phosphate. Histidine 89 (proton donor) is an active-site residue. Residue phenylalanine 114 participates in 5-amino-6-(D-ribitylamino)uracil binding. Position 128 (arginine 128) interacts with (2S)-2-hydroxy-3-oxobutyl phosphate.

This sequence belongs to the DMRL synthase family. Forms an icosahedral capsid composed of 60 subunits, arranged as a dodecamer of pentamers.

The catalysed reaction is (2S)-2-hydroxy-3-oxobutyl phosphate + 5-amino-6-(D-ribitylamino)uracil = 6,7-dimethyl-8-(1-D-ribityl)lumazine + phosphate + 2 H2O + H(+). It participates in cofactor biosynthesis; riboflavin biosynthesis; riboflavin from 2-hydroxy-3-oxobutyl phosphate and 5-amino-6-(D-ribitylamino)uracil: step 1/2. Its function is as follows. Catalyzes the formation of 6,7-dimethyl-8-ribityllumazine by condensation of 5-amino-6-(D-ribitylamino)uracil with 3,4-dihydroxy-2-butanone 4-phosphate. This is the penultimate step in the biosynthesis of riboflavin. The protein is 6,7-dimethyl-8-ribityllumazine synthase of Sodalis glossinidius (strain morsitans).